We begin with the raw amino-acid sequence, 341 residues long: N-(sulfonatooxy)alkenimidothioic acid sulfate-lyase (epithionitrile-forming) (341 aa).

Residues 1–24 form a disordered region; the sequence is MAPTLQGQWIKVGQKGGTGPGPRS. Kelch repeat units follow at residues 34-82, 87-133, 139-194, and 203-249; these read KLYS…VRMV, KIYI…FHSM, HVYV…VVQG, and ATSI…AHAV. A (Z)-N-(sulfonatooxy)alkanimidothioate-binding residues include K46, R94, T129, F130, R157, G186, K211, and V244. R94 serves as the catalytic Proton donor. The active-site Proton donor is the R157. Fe(2+)-binding residues include E260, D264, and H268. A (Z)-N-(sulfonatooxy)alkanimidothioate is bound at residue W303.

In terms of assembly, homodimer. Interacts with WRKY53. It depends on Fe(2+) as a cofactor. As to expression, expressed in epidermal cells of all above-ground organs except the anthers, in cambial cells of leaf and stem vascular bundles, and in glucosinolates rich S-cells found in stems just below the inflorescence. Absent from roots.

It is found in the cytoplasm. It localises to the nucleus. The catalysed reaction is a (Z)-N-(sulfonatooxy)alkenimidothioate = an epithionitrile + sulfate. It carries out the reaction a (Z)-N-(sulfonatooxy)alkanimidothioate = a nitrile + sulfur + sulfate. The enzyme catalyses (Z)-(indol-3-yl)-N-(sulfonatooxy)methanimidothioate = (indol-3-yl)acetonitrile + sulfur + sulfate. Not dependent on the presence of Fe(2+) although supplemental Fe(2+) increases nitriles formation. Its function is as follows. Specifier protein that contributes to constitutive and herbivore-induced simple nitrile formation. Converts glucosinolates both to epithionitriles and to simple nitriles in the presence of myrosinase. Promotes the formation of epithionitriles after hydrolysis of alkenylglucosinolates containing a terminal double bond. Mediates indol-3-ylacetonitrile (IACN) production from indol-3-ylmethylglucosinolate (glucobrassicin). Triggers the production of 3,4-epithiobutylnitrile from 2-propenylisothiocyanate, product of 2-propenylglucosinolate (sinigrin) catalysis by myrosinase. Seems inactive toward benzylglucosinolate (glucotropaeolin). Acts as a negative regulator of senescence. The protein is N-(sulfonatooxy)alkenimidothioic acid sulfate-lyase (epithionitrile-forming) of Arabidopsis thaliana (Mouse-ear cress).